A 353-amino-acid chain; its full sequence is Photosystem II protein D1 (353 aa).

An N-acetylthreonine modification is found at Thr2. Thr2 is modified (phosphothreonine). 3 consecutive transmembrane segments (helical) span residues 29-46, 118-133, and 142-156; these read YIGW…TATS, HFLL…EWEL, and WIAV…AATA. A chlorophyll a-binding site is contributed by His118. Position 126 (Tyr126) interacts with pheophytin a. [CaMn4O5] cluster is bound by residues Asp170 and Glu189. Residues 197 to 218 traverse the membrane as a helical segment; it reads FHMLGVAGVFGGSLFSAMHGSL. His198 contacts chlorophyll a. His215 contributes to the a quinone binding site. 2 residues coordinate Fe cation: His215 and His272. The helical transmembrane segment at 274 to 288 threads the bilayer; sequence FLAAWPVVGIWFTAL. Positions 332, 333, 342, and 344 each coordinate [CaMn4O5] cluster. Residues 345-353 constitute a propeptide that is removed on maturation; sequence AVEAPSING.

This sequence belongs to the reaction center PufL/M/PsbA/D family. PSII is composed of 1 copy each of membrane proteins PsbA, PsbB, PsbC, PsbD, PsbE, PsbF, PsbH, PsbI, PsbJ, PsbK, PsbL, PsbM, PsbT, PsbX, PsbY, PsbZ, Psb30/Ycf12, at least 3 peripheral proteins of the oxygen-evolving complex and a large number of cofactors. It forms dimeric complexes. It depends on The D1/D2 heterodimer binds P680, chlorophylls that are the primary electron donor of PSII, and subsequent electron acceptors. It shares a non-heme iron and each subunit binds pheophytin, quinone, additional chlorophylls, carotenoids and lipids. D1 provides most of the ligands for the Mn4-Ca-O5 cluster of the oxygen-evolving complex (OEC). There is also a Cl(-1) ion associated with D1 and D2, which is required for oxygen evolution. The PSII complex binds additional chlorophylls, carotenoids and specific lipids. as a cofactor. In terms of processing, tyr-161 forms a radical intermediate that is referred to as redox-active TyrZ, YZ or Y-Z. C-terminally processed by CTPA; processing is essential to allow assembly of the oxygen-evolving complex and thus photosynthetic growth.

The protein resides in the plastid. It localises to the chloroplast thylakoid membrane. The catalysed reaction is 2 a plastoquinone + 4 hnu + 2 H2O = 2 a plastoquinol + O2. Its function is as follows. Photosystem II (PSII) is a light-driven water:plastoquinone oxidoreductase that uses light energy to abstract electrons from H(2)O, generating O(2) and a proton gradient subsequently used for ATP formation. It consists of a core antenna complex that captures photons, and an electron transfer chain that converts photonic excitation into a charge separation. The D1/D2 (PsbA/PsbD) reaction center heterodimer binds P680, the primary electron donor of PSII as well as several subsequent electron acceptors. This Brassica napus (Rape) protein is Photosystem II protein D1.